The primary structure comprises 2224 residues: Myomegalin (2224 aa).

Coiled-coil stretches lie at residues 41–97 (REDV…RQQE), 162–205 (DQYS…LLEE), 236–318 (VSES…REML), and 350–682 (CSQL…ALRQ). Residues 206 to 236 (PASMEVQPVPKGLPTQQKPDLHETPTTQPPV) are disordered. Residues 219–236 (PTQQKPDLHETPTTQPPV) are compositionally biased toward polar residues. Residues 703-751 (GVTSIGPHHGEQTDQGSMQMPSRDDSTSLTAREEASIPRSTLGDSDTVA) are disordered. Thr705 is modified (phosphothreonine). The segment covering 724-738 (SRDDSTSLTAREEAS) has biased composition (basic and acidic residues). Coiled coils occupy residues 745 to 822 (GDSD…QLVD), 856 to 886 (NKRQ…RQLY), and 949 to 986 (AQEM…AGFS). 3 disordered regions span residues 1098 to 1128 (TGLP…SLPL), 1141 to 1161 (NKSQ…GSTK), and 1270 to 1298 (VSPP…DDSS). A compositionally biased stretch (polar residues) spans 1112 to 1124 (ENTTTARPGSRPQ). Coiled coils occupy residues 1159-1187 (STKH…SEAT), 1295-1331 (DDSS…LSAT), and 1377-1401 (GLQA…LPKT). A compositionally biased stretch (basic and acidic residues) spans 1276–1298 (KPLENKPGKQEEFRAHGTPDDSS). The Olduvai domain maps to 1497 to 1588 (KDHKSEKEEA…DEKKPSPSHS (92 aa)). 4 disordered regions span residues 1576–1637 (THYD…SLSQ), 1736–1757 (SSGQ…LSSG), 1805–1824 (LSST…QGLE), and 1962–2001 (KASL…LNSP). A compositionally biased stretch (polar residues) spans 1599-1609 (ESSSSPISLPT). The span at 1748-1757 (GSVSGELSSG) shows a compositional bias: low complexity. Residues 1769–1958 (GADLLEEHLG…RLQLEQQMDR (190 aa)) are a coiled coil. The stretch at 2148 to 2191 (KEGQLMEKELLDLRAQVSQQEQILQNTAARLKRANQRKKSMEQF) forms a coiled coil.

As to quaternary structure, interacts with PDE4D. Isoform 2 interacts with MAPRE1 and MAPRE3. Isoform 2 forms a pericentrosomal complex with AKAP9, CDK5RAP2 and EB1/MAPRE1; within this complex, may mediate MAPRE1-binding to CDK5RAP2. Interaction with AKAP9 stabilizes both proteins. Isoform 2 interacts (via N-terminus) with CAMSAP2; this interaction is much stronger in the presence of AKAP9. In complex with AKAP9, Isoform 2 recruits CAMSAP2 to the Golgi apparatus. Isoform 2 interacts with unglycosylated LGALS3BP; this interaction may connect the pericentrosomal complex to the gamma-tubulin ring complex (gamma-TuRC) to promote microtubule assembly and acetylation.

It localises to the cytoplasm. It is found in the cytoskeleton. The protein resides in the microtubule organizing center. The protein localises to the centrosome. Its subcellular location is the golgi apparatus. Functions as an anchor sequestering components of the cAMP-dependent pathway to Golgi and/or centrosomes. Its function is as follows. Participates in microtubule dynamics, promoting microtubule assembly. Depending upon the cell context, may act at the level of the Golgi apparatus or that of the centrosome. In complex with AKAP9, recruits CAMSAP2 to the Golgi apparatus and tethers non-centrosomal minus-end microtubules to the Golgi, an important step for polarized cell movement. In complex with AKAP9, EB1/MAPRE1 and CDK5RAP2, contributes to microtubules nucleation and extension from the centrosome to the cell periphery, a crucial process for directed cell migration, mitotic spindle orientation and cell-cycle progression. The chain is Myomegalin (Pde4dip) from Mus musculus (Mouse).